A 542-amino-acid polypeptide reads, in one-letter code: Membrane protein insertase YidC (542 aa).

The helical transmembrane segment at 5–25 threads the bilayer; it reads TLLAVILSITVFYVFSLLFAP. A disordered region spans residues 33–64; it reads ESTGQAVSAPVSAGQPVAGGVQPSASAPSLPA. Positions 54 to 64 are enriched in low complexity; that stretch reads QPSASAPSLPA. The next 5 helical transmembrane spans lie at 323–343, 345–365, 419–439, 463–483, and 500–520; these read LDLGWFTVIAKPLLYTLKYFY, YVGNYGVAIIIITIILKALFF, LPMLVQIPVFFALYKALMFSI, MLGLPFVIGPLPLLMGATMFI, and MLALPVVFTFMFLNFPSGLVL.

Belongs to the OXA1/ALB3/YidC family. Type 1 subfamily. Interacts with the Sec translocase complex via SecD. Specifically interacts with transmembrane segments of nascent integral membrane proteins during membrane integration.

It is found in the cell inner membrane. Required for the insertion and/or proper folding and/or complex formation of integral membrane proteins into the membrane. Involved in integration of membrane proteins that insert both dependently and independently of the Sec translocase complex, as well as at least some lipoproteins. Aids folding of multispanning membrane proteins. The chain is Membrane protein insertase YidC from Pelobacter propionicus (strain DSM 2379 / NBRC 103807 / OttBd1).